We begin with the raw amino-acid sequence, 291 residues long: Bifunctional protein FolD (291 aa).

Residues 171–173 (GVS) and Ile-239 contribute to the NADP(+) site.

The protein belongs to the tetrahydrofolate dehydrogenase/cyclohydrolase family. Homodimer.

The enzyme catalyses (6R)-5,10-methylene-5,6,7,8-tetrahydrofolate + NADP(+) = (6R)-5,10-methenyltetrahydrofolate + NADPH. It carries out the reaction (6R)-5,10-methenyltetrahydrofolate + H2O = (6R)-10-formyltetrahydrofolate + H(+). The protein operates within one-carbon metabolism; tetrahydrofolate interconversion. Functionally, catalyzes the oxidation of 5,10-methylenetetrahydrofolate to 5,10-methenyltetrahydrofolate and then the hydrolysis of 5,10-methenyltetrahydrofolate to 10-formyltetrahydrofolate. The protein is Bifunctional protein FolD of Xylella fastidiosa (strain Temecula1 / ATCC 700964).